Consider the following 427-residue polypeptide: Probable protein phosphatase 2C 64 (427 aa).

Residues 1–36 (MGNCVARSGTAVDAGGDGGEDGKRRRRRWKAPREDQ) form a disordered region. The 279-residue stretch at 53–331 (TATVYTQQGR…DDCAVVCLYL (279 aa)) folds into the PPM-type phosphatase domain. Aspartate 89, glycine 90, aspartate 276, and aspartate 322 together coordinate Mn(2+).

It belongs to the PP2C family. It depends on Mg(2+) as a cofactor. The cofactor is Mn(2+).

The enzyme catalyses O-phospho-L-seryl-[protein] + H2O = L-seryl-[protein] + phosphate. It carries out the reaction O-phospho-L-threonyl-[protein] + H2O = L-threonyl-[protein] + phosphate. The chain is Probable protein phosphatase 2C 64 from Oryza sativa subsp. japonica (Rice).